Reading from the N-terminus, the 184-residue chain is Elongation factor P (184 aa).

Belongs to the elongation factor P family.

The protein resides in the cytoplasm. Its pathway is protein biosynthesis; polypeptide chain elongation. In terms of biological role, involved in peptide bond synthesis. Stimulates efficient translation and peptide-bond synthesis on native or reconstituted 70S ribosomes in vitro. Probably functions indirectly by altering the affinity of the ribosome for aminoacyl-tRNA, thus increasing their reactivity as acceptors for peptidyl transferase. This is Elongation factor P from Paracidovorax citrulli (strain AAC00-1) (Acidovorax citrulli).